Reading from the N-terminus, the 175-residue chain is Large ribosomal subunit protein uL10 (175 aa).

It belongs to the universal ribosomal protein uL10 family. As to quaternary structure, part of the ribosomal stalk of the 50S ribosomal subunit. The N-terminus interacts with L11 and the large rRNA to form the base of the stalk. The C-terminus forms an elongated spine to which L12 dimers bind in a sequential fashion forming a multimeric L10(L12)X complex.

In terms of biological role, forms part of the ribosomal stalk, playing a central role in the interaction of the ribosome with GTP-bound translation factors. In Mycolicibacterium smegmatis (strain ATCC 700084 / mc(2)155) (Mycobacterium smegmatis), this protein is Large ribosomal subunit protein uL10.